The sequence spans 33 residues: rho operon leader peptide (33 aa).

Residues 1–25 (MRSEQISGSSLNPSCRFSSAYSPVT) show a composition bias toward polar residues. The interval 1-33 (MRSEQISGSSLNPSCRFSSAYSPVTRQRKDMSR) is disordered.

In Escherichia coli O157:H7, this protein is rho operon leader peptide (rhoL).